Here is a 492-residue protein sequence, read N- to C-terminus: Metal cation symporter ZIP14 (492 aa).

The first 30 residues, 1 to 30, serve as a signal peptide directing secretion; the sequence is MKLLLLHPAFQSCLLLTLLGLWRTTPEAHA. The Extracellular segment spans residues 31–157; the sequence is SSLGAPAISA…PSAVEVWGYG (127 aa). 3 N-linked (GlcNAc...) asparagine glycosylation sites follow: N77, N87, and N102. The helical transmembrane segment at 158 to 178 threads the bilayer; sequence LLCVTVISLCSLLGASVVPFM. The Cytoplasmic portion of the chain corresponds to 179-186; that stretch reads KKTFYKRL. The helical transmembrane segment at 187 to 207 threads the bilayer; sequence LLYFIALAIGTLYSNALFQLI. Over 208–224 the chain is Extracellular; that stretch reads PEAFGFNPLEDYYVSKS. A helical membrane pass occupies residues 225-245; it reads AVVFGGFYLFFFTEKILKILL. The Cytoplasmic portion of the chain corresponds to 246–397; the sequence is KQKNEHHHGH…LLNAGMSIQQ (152 aa). The HHHGHXHX-motif motif lies at 251-258; the sequence is HHHGHSHY. An XEXPHE-motif motif is present at residues 376 to 381; that stretch reads EEFPHE. The chain crosses the membrane as a helical span at residues 398-418; the sequence is ALFFNFLSACCCYLGLAFGIL. At 419-424 the chain is on the extracellular side; the sequence is AGSHFS. A helical membrane pass occupies residues 425–445; sequence ANWIFALAGGMFLYISLADMF. Over 446–460 the chain is Cytoplasmic; sequence PEMNEVCQEDERKGS. A helical transmembrane segment spans residues 461 to 481; it reads ILIPFIIQNLGLLTGFTIMVV. Over 482-492 the chain is Extracellular; it reads LTMYSGQIQIG.

This sequence belongs to the ZIP transporter (TC 2.A.5) family. In terms of assembly, homotrimer. Post-translationally, ubiquitinated. Ubiquitination occurs upon iron depletion. The ubiquitinated form undergoes proteasomal degradation. In terms of processing, N-glycosylated. N-glycosylation at Asn-102 is required for iron-regulated extraction of the transporter from membranes and subsequent proteasomal degradation. In terms of tissue distribution, ubiquitously expressed, with higher expression in liver, pancreas, fetal liver, thyroid gland, left and right ventricle, right atrium and fetal heart. Weakly expressed in spleen, thymus, and peripheral blood leukocytes. Expressed in liver and in brain by large neurons in the globus pallidus, the insular cortex and the dentate nucleus and to a lower extent in the putamen and the caudate nucleus (at protein level). Expressed in osteoblasts and giant osteoclast-like cells, but not in osteocytes found osteoblastoma and giant cell tumors (at protein level). Expressed by microvascular capillary endothelial cells that constitute the blood-brain barrier (at protein level). Expressed by macrophages. Widely expressed but not detected in brain, heart, skeletal muscle, placenta and fetal skin.

The protein localises to the cell membrane. It localises to the apical cell membrane. The protein resides in the basolateral cell membrane. It is found in the early endosome membrane. Its subcellular location is the late endosome membrane. The protein localises to the lysosome membrane. It carries out the reaction Zn(2+)(out) + 2 hydrogencarbonate(out) = Zn(2+)(in) + 2 hydrogencarbonate(in). It catalyses the reaction Mn(2+)(out) + 2 hydrogencarbonate(out) = Mn(2+)(in) + 2 hydrogencarbonate(in). The enzyme catalyses Fe(2+)(out) + 2 hydrogencarbonate(out) = Fe(2+)(in) + 2 hydrogencarbonate(in). The catalysed reaction is Cd(2+)(out) + 2 hydrogencarbonate(out) = Cd(2+)(in) + 2 hydrogencarbonate(in). Functionally, electroneutral transporter of the plasma membrane mediating the cellular uptake of the divalent metal cations zinc, manganese and iron that are important for tissue homeostasis, metabolism, development and immunity. Functions as an energy-dependent symporter, transporting through the membranes an electroneutral complex composed of a divalent metal cation and two bicarbonate anions. Beside these endogenous cellular substrates, can also import cadmium a non-essential metal which is cytotoxic and carcinogenic. Controls the cellular uptake by the intestinal epithelium of systemic zinc, which is in turn required to maintain tight junctions and the intestinal permeability. Modifies the activity of zinc-dependent phosphodiesterases, thereby indirectly regulating G protein-coupled receptor signaling pathways important for gluconeogenesis and chondrocyte differentiation. Regulates insulin receptor signaling, glucose uptake, glycogen synthesis and gluconeogenesis in hepatocytes through the zinc-dependent intracellular catabolism of insulin. Through zinc cellular uptake also plays a role in the adaptation of cells to endoplasmic reticulum stress. Major manganese transporter of the basolateral membrane of intestinal epithelial cells, it plays a central role in manganese systemic homeostasis through intestinal manganese uptake. Also involved in manganese extracellular uptake by cells of the blood-brain barrier. May also play a role in manganese and zinc homeostasis participating in their elimination from the blood through the hepatobiliary excretion. Also functions in the extracellular uptake of free iron. May also function intracellularly and mediate the transport from endosomes to cytosol of iron endocytosed by transferrin. Plays a role in innate immunity by regulating the expression of cytokines by activated macrophages. The polypeptide is Metal cation symporter ZIP14 (Homo sapiens (Human)).